The following is a 199-amino-acid chain: Recombination protein RecR (199 aa).

The C4-type zinc-finger motif lies at 57-72 (CSVCGNITEQDPCAIC). The Toprim domain maps to 80 to 176 (STIMVVEEAK…KVTRLAAGLA (97 aa)).

Belongs to the RecR family.

In terms of biological role, may play a role in DNA repair. It seems to be involved in an RecBC-independent recombinational process of DNA repair. It may act with RecF and RecO. This is Recombination protein RecR from Lactobacillus delbrueckii subsp. bulgaricus (strain ATCC BAA-365 / Lb-18).